A 296-amino-acid chain; its full sequence is Cytidine deaminase (296 aa).

2 consecutive CMP/dCMP-type deaminase domains span residues serine 52–aspartate 167 and glutamine 191–leucine 296. Residue asparagine 93–glutamate 95 coordinates substrate. Histidine 106 is a binding site for Zn(2+). Glutamate 108 serves as the catalytic Proton donor. Residues cysteine 133 and cysteine 136 each contribute to the Zn(2+) site.

This sequence belongs to the cytidine and deoxycytidylate deaminase family. In terms of assembly, homodimer. It depends on Zn(2+) as a cofactor.

The catalysed reaction is cytidine + H2O + H(+) = uridine + NH4(+). It catalyses the reaction 2'-deoxycytidine + H2O + H(+) = 2'-deoxyuridine + NH4(+). Its function is as follows. This enzyme scavenges exogenous and endogenous cytidine and 2'-deoxycytidine for UMP synthesis. This Mannheimia succiniciproducens (strain KCTC 0769BP / MBEL55E) protein is Cytidine deaminase.